The chain runs to 194 residues: Peptidyl-tRNA hydrolase (194 aa).

A tRNA-binding site is contributed by His-17. His-22 (proton acceptor) is an active-site residue. Phe-68, Asn-70, and Asn-116 together coordinate tRNA.

Belongs to the PTH family. As to quaternary structure, monomer.

It localises to the cytoplasm. It carries out the reaction an N-acyl-L-alpha-aminoacyl-tRNA + H2O = an N-acyl-L-amino acid + a tRNA + H(+). Its function is as follows. Hydrolyzes ribosome-free peptidyl-tRNAs (with 1 or more amino acids incorporated), which drop off the ribosome during protein synthesis, or as a result of ribosome stalling. Catalyzes the release of premature peptidyl moieties from peptidyl-tRNA molecules trapped in stalled 50S ribosomal subunits, and thus maintains levels of free tRNAs and 50S ribosomes. The polypeptide is Peptidyl-tRNA hydrolase (Xanthomonas oryzae pv. oryzae (strain MAFF 311018)).